The primary structure comprises 82 residues: uncharacterized protein (82 aa).

Residues 1 to 20 (MMNLSPPFKSPSGSSRAGRR) form a disordered region.

This is an uncharacterized protein from Archaeoglobus fulgidus (strain ATCC 49558 / DSM 4304 / JCM 9628 / NBRC 100126 / VC-16).